We begin with the raw amino-acid sequence, 405 residues long: Formin-like protein 15a (405 aa).

The disordered stretch occupies residues 1–31 (MSLVEISGSDAMAAPMPGRVPPPPPRPPPMP). Positions 18–31 (GRVPPPPPRPPPMP) are enriched in pro residues. Residues 52–405 (FPRPAKKRAS…VCWFFVRLMI (354 aa)) enclose the FH2 domain.

This sequence belongs to the formin-like family. Class-II subfamily.

The protein is Formin-like protein 15a (FH15A) of Arabidopsis thaliana (Mouse-ear cress).